Reading from the N-terminus, the 61-residue chain is Small ribosomal subunit protein uS14B (61 aa).

Zn(2+)-binding residues include Cys-24, Cys-27, Cys-40, and Cys-43.

It belongs to the universal ribosomal protein uS14 family. Zinc-binding uS14 subfamily. As to quaternary structure, part of the 30S ribosomal subunit. Contacts proteins S3 and S10. It depends on Zn(2+) as a cofactor.

Binds 16S rRNA, required for the assembly of 30S particles and may also be responsible for determining the conformation of the 16S rRNA at the A site. The sequence is that of Small ribosomal subunit protein uS14B from Lactococcus lactis subsp. lactis (strain IL1403) (Streptococcus lactis).